Here is a 332-residue protein sequence, read N- to C-terminus: MKVSYEALKQEFKRVLLARNVREDIAEECATMFADTTESGVYSHGVNRFPRFISQLEKGDIVPDAEPTKVLSLGAIEQWDAHQAIGNLTAKKMMDRAMEIADQFGIGVVALKNANHWMRGGGYGWQAAEKGYIGICWTNSIAVMPPWGAKECRIGTNPLIIAVPTTPITMVDMSCSMYSYGMLEVHRLAGRQTFVDAGFDDEGNLTRDPGTVEKNRRLLPMGFWKGSGLSIVLDMIATLLSNGLSVAEVTEEKDDEYCVSQIFIAIEVDRLIDGNTKDEKLNKIMDYVRTAERADPDVAIRLPGHEFTAIRAENKANGIPVDETVWEKIKSL.

Residue His44 is the Proton donor of the active site. NAD(+) contacts are provided by residues 168 to 174 (ITMVDMS), 224 to 225 (WK), and 304 to 306 (GHE).

Belongs to the LDH2/MDH2 oxidoreductase family. DlgD subfamily. As to quaternary structure, homodimer.

It localises to the cytoplasm. It catalyses the reaction 3-dehydro-L-gulonate + NAD(+) = 2,3-dioxo-L-gulonate + NADH + H(+). The catalysed reaction is 3-dehydro-L-gulonate + NADP(+) = 2,3-dioxo-L-gulonate + NADPH + H(+). Functionally, catalyzes the reduction of 2,3-diketo-L-gulonate in the presence of NADH, to form 3-keto-L-gulonate. In Pasteurella multocida (strain Pm70), this protein is 2,3-diketo-L-gulonate reductase.